The chain runs to 648 residues: Bifunctional protein TilS/HprT (648 aa).

29–34 (SGGPDS) provides a ligand contact to ATP. D627 serves as a coordination point for Mg(2+).

This sequence in the N-terminal section; belongs to the tRNA(Ile)-lysidine synthase family. In the C-terminal section; belongs to the purine/pyrimidine phosphoribosyltransferase family. Mg(2+) is required as a cofactor.

The protein resides in the cytoplasm. It carries out the reaction IMP + diphosphate = hypoxanthine + 5-phospho-alpha-D-ribose 1-diphosphate. The enzyme catalyses GMP + diphosphate = guanine + 5-phospho-alpha-D-ribose 1-diphosphate. The catalysed reaction is cytidine(34) in tRNA(Ile2) + L-lysine + ATP = lysidine(34) in tRNA(Ile2) + AMP + diphosphate + H(+). Its function is as follows. Ligates lysine onto the cytidine present at position 34 of the AUA codon-specific tRNA(Ile) that contains the anticodon CAU, in an ATP-dependent manner. Cytidine is converted to lysidine, thus changing the amino acid specificity of the tRNA from methionine to isoleucine. In Listeria monocytogenes serotype 4b (strain F2365), this protein is Bifunctional protein TilS/HprT (tilS/hprT).